The chain runs to 178 residues: Peptide deformylase (178 aa).

2 residues coordinate Fe cation: Cys96 and His138. Glu139 is a catalytic residue. Residue His142 participates in Fe cation binding.

Belongs to the polypeptide deformylase family. Requires Fe(2+) as cofactor.

It carries out the reaction N-terminal N-formyl-L-methionyl-[peptide] + H2O = N-terminal L-methionyl-[peptide] + formate. Removes the formyl group from the N-terminal Met of newly synthesized proteins. Requires at least a dipeptide for an efficient rate of reaction. N-terminal L-methionine is a prerequisite for activity but the enzyme has broad specificity at other positions. The chain is Peptide deformylase from Bartonella tribocorum (strain CIP 105476 / IBS 506).